The sequence spans 202 residues: Na(+)-translocating NADH-quinone reductase subunit E (202 aa).

6 helical membrane passes run 4 to 24 (LAGL…FFLG), 35 to 55 (IEVA…TVPI), 81 to 101 (FLGL…LEMF), 114 to 134 (GIYL…LFMV), 144 to 164 (LVYG…LAGV), and 180 to 200 (LGIT…FSGI).

It belongs to the NqrDE/RnfAE family. As to quaternary structure, composed of six subunits; NqrA, NqrB, NqrC, NqrD, NqrE and NqrF.

It is found in the cell inner membrane. It catalyses the reaction a ubiquinone + n Na(+)(in) + NADH + H(+) = a ubiquinol + n Na(+)(out) + NAD(+). In terms of biological role, NQR complex catalyzes the reduction of ubiquinone-1 to ubiquinol by two successive reactions, coupled with the transport of Na(+) ions from the cytoplasm to the periplasm. NqrA to NqrE are probably involved in the second step, the conversion of ubisemiquinone to ubiquinol. The polypeptide is Na(+)-translocating NADH-quinone reductase subunit E (Nitrosomonas europaea (strain ATCC 19718 / CIP 103999 / KCTC 2705 / NBRC 14298)).